Consider the following 327-residue polypeptide: MTATKQHKKVILVGDGAVGSSYAFALVTQNIAQELGIIDIFKEKTQGDAEDLSHALAFTSPKKIYAAEYSDCHDADLVVLTAGAPQKPGETRLDLVEKNLRINKEVVTQIVASGFNGIFLVAANPVDVLTYSTWKFSGFPKERVIGSGTSLDSARFRQALADKIGVDARSVHAYIMGEHGDSEFAVWSHANVAGVKLEQWLQDNRDIDEQGLIDLFVSVRDAAYSIINKKGATFYGIAVALARITKAILDDENAVLPLSVFQEGQYEGVEDCYIGQPAIVGAYGVVRPVNIPLNDAELQKMQASAKQLKDIIDEAFAKEEFASVAKN.

NAD(+)-binding positions include Val-18, Asp-39, Lys-44, Tyr-69, and 83–84 (GA). Substrate is bound by residues Gln-86, Arg-92, and 124–127 (NPVD). NAD(+)-binding positions include 122–124 (AAN) and Ser-147. 152-155 (DSAR) is a binding site for substrate. Beta-D-fructose 1,6-bisphosphate is bound by residues Arg-157 and His-172. The active-site Proton acceptor is the His-179. At Tyr-224 the chain carries Phosphotyrosine. Thr-233 lines the substrate pocket.

This sequence belongs to the LDH/MDH superfamily. LDH family. As to quaternary structure, homotetramer.

The protein localises to the cytoplasm. The catalysed reaction is (S)-lactate + NAD(+) = pyruvate + NADH + H(+). The protein operates within fermentation; pyruvate fermentation to lactate; (S)-lactate from pyruvate: step 1/1. Its activity is regulated as follows. Allosterically activated by fructose 1,6-bisphosphate (FBP). In terms of biological role, catalyzes the conversion of lactate to pyruvate. This is L-lactate dehydrogenase from Streptococcus uberis (strain ATCC BAA-854 / 0140J).